A 529-amino-acid chain; its full sequence is Peptide chain release factor 3 (529 aa).

The 270-residue stretch at 11–280 (AKRRTFAIIS…GLVEWAPAPM (270 aa)) folds into the tr-type G domain. GTP is bound by residues 20-27 (SHPDAGKT), 88-92 (DTPGH), and 142-145 (NKLD).

This sequence belongs to the TRAFAC class translation factor GTPase superfamily. Classic translation factor GTPase family. PrfC subfamily.

The protein resides in the cytoplasm. Increases the formation of ribosomal termination complexes and stimulates activities of RF-1 and RF-2. It binds guanine nucleotides and has strong preference for UGA stop codons. It may interact directly with the ribosome. The stimulation of RF-1 and RF-2 is significantly reduced by GTP and GDP, but not by GMP. The protein is Peptide chain release factor 3 of Klebsiella pneumoniae (strain 342).